A 283-amino-acid polypeptide reads, in one-letter code: ATP phosphoribosyltransferase (283 aa).

It belongs to the ATP phosphoribosyltransferase family. Long subfamily. Mg(2+) is required as a cofactor.

The protein localises to the cytoplasm. It carries out the reaction 1-(5-phospho-beta-D-ribosyl)-ATP + diphosphate = 5-phospho-alpha-D-ribose 1-diphosphate + ATP. It participates in amino-acid biosynthesis; L-histidine biosynthesis; L-histidine from 5-phospho-alpha-D-ribose 1-diphosphate: step 1/9. Feedback inhibited by histidine. Catalyzes the condensation of ATP and 5-phosphoribose 1-diphosphate to form N'-(5'-phosphoribosyl)-ATP (PR-ATP). Has a crucial role in the pathway because the rate of histidine biosynthesis seems to be controlled primarily by regulation of HisG enzymatic activity. This chain is ATP phosphoribosyltransferase, found in Bifidobacterium longum subsp. infantis (strain ATCC 15697 / DSM 20088 / JCM 1222 / NCTC 11817 / S12).